We begin with the raw amino-acid sequence, 559 residues long: DNA primase (559 aa).

The CHC2-type zinc finger occupies 37-61; the sequence is CPFHEERSASFSVNQVKGFYYCFGC. The 82-residue stretch at 246–327 folds into the Toprim domain; it reads KQVIVTEGYL…KGGVILFENN (82 aa). Mg(2+) contacts are provided by E252, D296, and D298.

The protein belongs to the DnaG primase family. Monomer. Interacts with DnaB. Zn(2+) is required as a cofactor. The cofactor is Mg(2+).

It carries out the reaction ssDNA + n NTP = ssDNA/pppN(pN)n-1 hybrid + (n-1) diphosphate.. In terms of biological role, RNA polymerase that catalyzes the synthesis of short RNA molecules used as primers for DNA polymerase during DNA replication. The protein is DNA primase of Helicobacter pylori (strain J99 / ATCC 700824) (Campylobacter pylori J99).